The following is a 303-amino-acid chain: Exosome complex component RRP4 homolog (303 aa).

The region spanning 175–213 (GILIKVPPHLIKKSKKHFHTLPYGMAVIIGCNGSVWVTP) is the KH domain.

Belongs to the RRP4 family. In terms of assembly, component of the RNA exosome complex. Ubiquitously expressed.

It is found in the nucleus. The protein localises to the nucleolus. The protein resides in the nucleoplasm. Functionally, non-catalytic component of the RNA exosome complex which has 3'-&gt;5' exoribonuclease activity and participates in a multitude of cellular RNA processing and degradation events. Involved in regulation of antisense ribosomal siRNA production. Involved in response to cold-warm shock. The sequence is that of Exosome complex component RRP4 homolog from Caenorhabditis elegans.